A 223-amino-acid polypeptide reads, in one-letter code: Large ribosomal subunit protein uL3 (223 aa).

It belongs to the universal ribosomal protein uL3 family. In terms of assembly, part of the 50S ribosomal subunit. Forms a cluster with proteins L14 and L19.

Its function is as follows. One of the primary rRNA binding proteins, it binds directly near the 3'-end of the 23S rRNA, where it nucleates assembly of the 50S subunit. This is Large ribosomal subunit protein uL3 from Mycoplasma capricolum subsp. capricolum (strain California kid / ATCC 27343 / NCTC 10154).